Consider the following 124-residue polypeptide: Small ribosomal subunit protein bS16 (124 aa).

Positions 81 to 90 are enriched in basic residues; sequence LKKRPARNNP. The segment at 81 to 124 is disordered; sequence LKKRPARNNPHKGEPGKKAQERIAAAKQAAEDAAAAAEADSASE. The segment covering 91 to 101 has biased composition (basic and acidic residues); it reads HKGEPGKKAQE. Over residues 102 to 124 the composition is skewed to low complexity; sequence RIAAAKQAAEDAAAAAEADSASE.

This sequence belongs to the bacterial ribosomal protein bS16 family.

The chain is Small ribosomal subunit protein bS16 from Bartonella tribocorum (strain CIP 105476 / IBS 506).